A 503-amino-acid polypeptide reads, in one-letter code: Maturase K (503 aa).

This sequence belongs to the intron maturase 2 family. MatK subfamily.

Its subcellular location is the plastid. The protein resides in the chloroplast. Its function is as follows. Usually encoded in the trnK tRNA gene intron. Probably assists in splicing its own and other chloroplast group II introns. The polypeptide is Maturase K (Silene latifolia (White campion)).